The sequence spans 131 residues: Small ribosomal subunit protein bS6 (131 aa).

The segment at 92-131 (RVDEHKDGPSVQMQKRDERERGDRGDRGERRERRDRDDRN) is disordered.

The protein belongs to the bacterial ribosomal protein bS6 family.

Functionally, binds together with bS18 to 16S ribosomal RNA. The sequence is that of Small ribosomal subunit protein bS6 from Paracoccus denitrificans (strain Pd 1222).